Reading from the N-terminus, the 161-residue chain is Protein shisa-like-2B (161 aa).

Residues 65 to 85 form a helical membrane-spanning segment; sequence IGALIGLGIAALVLLAFVISV. The segment at 115–134 is disordered; it reads QEGNSNRKSKAPRSNAASNS.

Belongs to the shisa family.

The protein resides in the membrane. The polypeptide is Protein shisa-like-2B (SHISAL2B) (Bos taurus (Bovine)).